A 156-amino-acid polypeptide reads, in one-letter code: Small ribosomal subunit protein uS7c (156 aa).

It belongs to the universal ribosomal protein uS7 family. In terms of assembly, part of the 30S ribosomal subunit.

Its subcellular location is the plastid. The protein localises to the chloroplast. One of the primary rRNA binding proteins, it binds directly to 16S rRNA where it nucleates assembly of the head domain of the 30S subunit. The chain is Small ribosomal subunit protein uS7c (rps7) from Guillardia theta (Cryptophyte).